A 299-amino-acid chain; its full sequence is Protein charybde (299 aa).

The interval 73–103 is disordered; that stretch reads LNTRPSATPPSAGGGGPLAGGGSVGMTTPKQ. A compositionally biased stretch (gly residues) spans 84–96; the sequence is AGGGGPLAGGGSV.

The protein belongs to the DDIT4 family.

The protein localises to the cytoplasm. In terms of biological role, inhibits cell growth by regulating the Tor pathway upstream of the Tsc1-Tsc2 complex and downstream of Akt1. Acts as a cell death activator during head development. The chain is Protein charybde (chrb) from Drosophila melanogaster (Fruit fly).